The sequence spans 310 residues: Vomeronasal type-1 receptor 47 (310 aa).

Topologically, residues 1 to 16 are extracellular; it reads MNENSRLHTHSNIRNT. Residues 17–37 form a helical membrane-spanning segment; it reads FFSEIGIGISGNSFLLLFHII. At 38–49 the chain is on the cytoplasmic side; sequence KFFRGHRPRLTD. A helical transmembrane segment spans residues 50 to 70; it reads LPIGLLSLIHLLMLLVAAVIA. Topologically, residues 71–91 are extracellular; it reads TDIFISWRGWNDIICKFLVYL. C85 and C172 are oxidised to a cystine. Residues 92 to 114 form a helical membrane-spanning segment; that stretch reads YRSLRGLSLCTTSMLSVLQAIIL. The Cytoplasmic portion of the chain corresponds to 115–131; sequence SPRSYCLAKFKRKSSHN. Residues 132 to 152 form a helical membrane-spanning segment; the sequence is ISCAIIFLSVLYMSISSHLFI. Residues 153-193 lie on the Extracellular side of the membrane; sequence SITATLNLTMNNFLYVSQSCSLLPLSYLMQSMYSTLLVLRE. The N-linked (GlcNAc...) asparagine glycan is linked to N159. A helical membrane pass occupies residues 194–214; it reads VFLIGLMVLSTSYMVALLCMH. At 215-238 the chain is on the cytoplasmic side; it reads RKQAQNLQGTSLSLKTAPEQRATQ. Residues 239–259 traverse the membrane as a helical segment; that stretch reads TILMLMTFFVLMSIFDSIVSS. Residues 260-269 are Extracellular-facing; that stretch reads SRAMFLDDST. Residues 270–290 traverse the membrane as a helical segment; it reads CYSIYIFVMHIYATVSPFVFM. At 291 to 310 the chain is on the cytoplasmic side; the sequence is STEKHLVNFFRSMCEWIINM.

This sequence belongs to the G-protein coupled receptor 1 family.

The protein resides in the cell membrane. Its function is as follows. Putative pheromone receptor implicated in the regulation of social and reproductive behavior. The chain is Vomeronasal type-1 receptor 47 (Vmn1r47) from Mus musculus (Mouse).